We begin with the raw amino-acid sequence, 85 residues long: Exodeoxyribonuclease 7 small subunit (85 aa).

Residues 66 to 85 (SGEGEEVPLDTPDAEDGDGE) form a disordered region. Over residues 68–85 (EGEEVPLDTPDAEDGDGE) the composition is skewed to acidic residues.

It belongs to the XseB family. In terms of assembly, heterooligomer composed of large and small subunits.

The protein resides in the cytoplasm. The catalysed reaction is Exonucleolytic cleavage in either 5'- to 3'- or 3'- to 5'-direction to yield nucleoside 5'-phosphates.. In terms of biological role, bidirectionally degrades single-stranded DNA into large acid-insoluble oligonucleotides, which are then degraded further into small acid-soluble oligonucleotides. This Thioalkalivibrio sulfidiphilus (strain HL-EbGR7) protein is Exodeoxyribonuclease 7 small subunit.